Consider the following 538-residue polypeptide: Furcatin hydrolase (538 aa).

The N-terminal 66 residues, 1 to 66, are a transit peptide targeting the chloroplast; sequence MATITTLASS…NFNKDNWLAS (66 aa). Residues 18–37 are disordered; sequence SFPGGSSRKPKKDNLSIKPP. Residues Gln-88, His-192, and 237–238 each bind a beta-D-glucoside; that span reads NE. Catalysis depends on Glu-238, which acts as the Proton donor. Residues Cys-257 and Cys-260 are joined by a disulfide bond. Residues Tyr-376, Glu-447, Trp-494, 501 to 502, and Phe-510 contribute to the a beta-D-glucoside site; that span reads EW. Glu-447 functions as the Nucleophile in the catalytic mechanism.

This sequence belongs to the glycosyl hydrolase 1 family. In terms of tissue distribution, expressed in young and mature leaves, but not in fruit and stem.

The protein localises to the plastid. It is found in the chloroplast. The catalysed reaction is 7-[beta-D-apiofuranosyl-(1-&gt;6)-beta-D-glucopyranosyloxy]isoflavonoid + H2O = a 7-hydroxyisoflavonoid + beta-D-apiofuranosyl-(1-&gt;6)-D-glucose.. Functionally, disaccharide-specific acuminosidase, hydrolyzes the beta-glycosidic bond between p-allylphenol and acuminose with retention of anomeric configuration. Has highest activity towards furcatin, and lower activity towards beta-primeverosides and beta-vicianoside. Has very low activity towards beta-gentobiosides. The protein is Furcatin hydrolase of Viburnum furcatum (Scarlet leaved viburnum).